The chain runs to 244 residues: 5-oxoprolinase subunit A (244 aa).

Belongs to the LamB/PxpA family. Forms a complex composed of PxpA, PxpB and PxpC.

The catalysed reaction is 5-oxo-L-proline + ATP + 2 H2O = L-glutamate + ADP + phosphate + H(+). In terms of biological role, catalyzes the cleavage of 5-oxoproline to form L-glutamate coupled to the hydrolysis of ATP to ADP and inorganic phosphate. This chain is 5-oxoprolinase subunit A, found in Salmonella agona (strain SL483).